Consider the following 299-residue polypeptide: 4-diphosphocytidyl-2-C-methyl-D-erythritol kinase (299 aa).

Lys33 is a catalytic residue. Residue Pro115–Ser125 participates in ATP binding. The active site involves Asp154.

Belongs to the GHMP kinase family. IspE subfamily.

The catalysed reaction is 4-CDP-2-C-methyl-D-erythritol + ATP = 4-CDP-2-C-methyl-D-erythritol 2-phosphate + ADP + H(+). It functions in the pathway isoprenoid biosynthesis; isopentenyl diphosphate biosynthesis via DXP pathway; isopentenyl diphosphate from 1-deoxy-D-xylulose 5-phosphate: step 3/6. In terms of biological role, catalyzes the phosphorylation of the position 2 hydroxy group of 4-diphosphocytidyl-2C-methyl-D-erythritol. The sequence is that of 4-diphosphocytidyl-2-C-methyl-D-erythritol kinase from Deinococcus geothermalis (strain DSM 11300 / CIP 105573 / AG-3a).